The primary structure comprises 294 residues: Flavin-dependent thymidylate synthase (294 aa).

In terms of domain architecture, ThyX spans 27–250 (GFIRVIDYMG…PFTYEAFEEY (224 aa)). Residues Thr-73, 96–98 (RHR), and Glu-104 each bind FAD. Residues 93 to 96 (QWIR), 104 to 108 (EYSAR), and Arg-189 each bind dUMP. The ThyX motif signature appears at 96–106 (RHRTASVNEYS). FAD is bound by residues 205 to 207 (NLH) and His-211. Arg-216 is a binding site for dUMP. Arg-216 acts as the Involved in ionization of N3 of dUMP, leading to its activation in catalysis.

It belongs to the thymidylate synthase ThyX family. Homotetramer. The cofactor is FAD.

It catalyses the reaction dUMP + (6R)-5,10-methylene-5,6,7,8-tetrahydrofolate + NADPH + H(+) = dTMP + (6S)-5,6,7,8-tetrahydrofolate + NADP(+). It participates in pyrimidine metabolism; dTTP biosynthesis. Its function is as follows. Catalyzes the reductive methylation of 2'-deoxyuridine-5'-monophosphate (dUMP) to 2'-deoxythymidine-5'-monophosphate (dTMP) while utilizing 5,10-methylenetetrahydrofolate (mTHF) as the methyl donor, and NADPH and FADH(2) as the reductant. This chain is Flavin-dependent thymidylate synthase, found in Rickettsia bellii (strain RML369-C).